A 309-amino-acid chain; its full sequence is Large ribosomal subunit protein mL45 (309 aa).

This sequence belongs to the mitochondrion-specific ribosomal protein mL45 family. Component of the mitochondrial ribosome large subunit (39S) which comprises a 16S rRNA and about 50 distinct proteins.

The protein resides in the mitochondrion. Its function is as follows. Component of the mitochondrial large ribosomal subunit (mt-LSU). Within the mitochondrial ribosomes, required to direct the nascent polypeptide toward the tunnel exit and position the exit at a distance from the membrane surface. This chain is Large ribosomal subunit protein mL45 (mrpl45), found in Xenopus laevis (African clawed frog).